A 974-amino-acid polypeptide reads, in one-letter code: Coiled-coil domain-containing protein 146 (974 aa).

The segment at 1 to 44 (MEDRSKYIAEESEDEEDEEQEEKEKKGGASTSTETEEDQEDIPS) is disordered. Acidic residues predominate over residues 10–21 (EESEDEEDEEQE). Position 12 is a phosphoserine (Ser-12). Coiled coils occupy residues 105–160 (VQLL…QERE), 195–340 (KLLK…TKEN), 421–474 (LPEQ…REVL), 512–660 (KKLE…NESG), 687–712 (QDIE…QRQI), and 767–848 (LTEE…ELSM).

As to quaternary structure, interacts with CCDC38 and CCDC42. Interacts with intraflagellar transport proteins IFT20 and IFT88.

Its subcellular location is the cytoplasm. The protein localises to the cytoskeleton. It is found in the microtubule organizing center. The protein resides in the centrosome. It localises to the centriole. Its subcellular location is the cell projection. The protein localises to the cilium. It is found in the flagellum. The protein resides in the flagellum axoneme. It localises to the cilium basal body. Its subcellular location is the midbody. Its function is as follows. Essential for sperm flagellum biogenesis and male fertility. The sequence is that of Coiled-coil domain-containing protein 146 (Ccdc146) from Rattus norvegicus (Rat).